The following is a 445-amino-acid chain: Xylose isomerase (445 aa).

Residues H107 and D110 contribute to the active site. 7 residues coordinate Mg(2+): E238, E274, H277, D302, D313, D315, and D345.

Belongs to the xylose isomerase family. As to quaternary structure, homotetramer. Mg(2+) is required as a cofactor.

It is found in the cytoplasm. The catalysed reaction is alpha-D-xylose = alpha-D-xylulofuranose. This is Xylose isomerase from Bacillus velezensis (strain DSM 23117 / BGSC 10A6 / LMG 26770 / FZB42) (Bacillus amyloliquefaciens subsp. plantarum).